The following is a 507-amino-acid chain: MNNFPWITSIVMLPILAGLLIPFIPDENGKNVRWYALGIGLLDFLLISYIFGYKYNIQDTSLQLIDDYEWISSINFHWRLGIDGLSIPLILLTGFITTLAMLGAWPIQKNAKLFYFLMLAMYSGQLGVFASQDLLLFFLMWELELIPIYILLIIWGGKKRLYAATKFILYTALGSIFILIAAFGMAFYGENMSFDMQILGEKEYPINLEILFYICFLIAYAVKLPAFPVHTWLPDTHGEAHYSTCMLLAGILLKMGGYALIRINMNMLPNAHIYFAPYLAIIGVINIIYAALTSFAQRNIKRKIAYSSISHMGFVLIGISSFTDIGLSGAMLQMVSHGLIGASLFFLAGTTYDRTRTLILEDMGGIAKYMPKIFAMFTTCSLASLALPGMSGFVAELMVFLGFANSNAYSIEFRGIITFLEAIGIIVTPIYLLSMLRQVFYGSENLKLLKVNNLIDASAREIFIISCLLVPVIGIGIYPRILTQIYDLKTNAIIEHLEIIRSNSQIM.

14 helical membrane passes run 4–24, 34–54, 87–107, 111–131, 134–154, 167–187, 210–230, 241–261, 273–293, 312–332, 333–353, 383–403, 416–436, and 462–482; these read FPWI…IPFI, WYAL…FGYK, IPLI…AWPI, AKLF…VFAS, LLLF…LLII, FILY…GMAF, ILFY…FPVH, HYST…YALI, IYFA…AALT, MGFV…GAML, QMVS…TTYD, ASLA…FLGF, IITF…LSML, and IFII…PRIL.

Belongs to the complex I subunit 4 family.

The protein resides in the plastid. It localises to the chloroplast thylakoid membrane. It catalyses the reaction a plastoquinone + NADH + (n+1) H(+)(in) = a plastoquinol + NAD(+) + n H(+)(out). The catalysed reaction is a plastoquinone + NADPH + (n+1) H(+)(in) = a plastoquinol + NADP(+) + n H(+)(out). This is NAD(P)H-quinone oxidoreductase chain 4, chloroplastic (ndhD) from Mesostigma viride (Green alga).